The following is a 167-amino-acid chain: Lipoprotein signal peptidase (167 aa).

3 helical membrane passes run 10–30 (LIWL…KAWV), 68–88 (WQMW…TFWL), and 98–118 (SALP…DRFL). Residues Asp-124 and Asp-142 contribute to the active site. Residues 138–158 (FNLADSAIVAGAIGIGLLSLF) form a helical membrane-spanning segment.

Belongs to the peptidase A8 family.

It is found in the cell inner membrane. The catalysed reaction is Release of signal peptides from bacterial membrane prolipoproteins. Hydrolyzes -Xaa-Yaa-Zaa-|-(S,diacylglyceryl)Cys-, in which Xaa is hydrophobic (preferably Leu), and Yaa (Ala or Ser) and Zaa (Gly or Ala) have small, neutral side chains.. It functions in the pathway protein modification; lipoprotein biosynthesis (signal peptide cleavage). In terms of biological role, this protein specifically catalyzes the removal of signal peptides from prolipoproteins. In Xylella fastidiosa (strain 9a5c), this protein is Lipoprotein signal peptidase.